The primary structure comprises 70 residues: ATP synthase subunit c (70 aa).

A run of 2 helical transmembrane segments spans residues I4–I24 and F47–V67.

The protein belongs to the ATPase C chain family. F-type ATPases have 2 components, F(1) - the catalytic core - and F(0) - the membrane proton channel. F(1) has five subunits: alpha(3), beta(3), gamma(1), delta(1), epsilon(1). F(0) has three main subunits: a(1), b(2) and c(10-14). The alpha and beta chains form an alternating ring which encloses part of the gamma chain. F(1) is attached to F(0) by a central stalk formed by the gamma and epsilon chains, while a peripheral stalk is formed by the delta and b chains.

It localises to the cell membrane. Functionally, f(1)F(0) ATP synthase produces ATP from ADP in the presence of a proton or sodium gradient. F-type ATPases consist of two structural domains, F(1) containing the extramembraneous catalytic core and F(0) containing the membrane proton channel, linked together by a central stalk and a peripheral stalk. During catalysis, ATP synthesis in the catalytic domain of F(1) is coupled via a rotary mechanism of the central stalk subunits to proton translocation. Key component of the F(0) channel; it plays a direct role in translocation across the membrane. A homomeric c-ring of between 10-14 subunits forms the central stalk rotor element with the F(1) delta and epsilon subunits. This is ATP synthase subunit c from Staphylococcus carnosus (strain TM300).